The sequence spans 516 residues: Bifunctional purine biosynthesis protein PurH (516 aa).

The MGS-like domain maps to 1–146; the sequence is MAPFALLSVS…KNHADVAVLT (146 aa).

The protein belongs to the PurH family.

It carries out the reaction (6R)-10-formyltetrahydrofolate + 5-amino-1-(5-phospho-beta-D-ribosyl)imidazole-4-carboxamide = 5-formamido-1-(5-phospho-D-ribosyl)imidazole-4-carboxamide + (6S)-5,6,7,8-tetrahydrofolate. The enzyme catalyses IMP + H2O = 5-formamido-1-(5-phospho-D-ribosyl)imidazole-4-carboxamide. Its pathway is purine metabolism; IMP biosynthesis via de novo pathway; 5-formamido-1-(5-phospho-D-ribosyl)imidazole-4-carboxamide from 5-amino-1-(5-phospho-D-ribosyl)imidazole-4-carboxamide (10-formyl THF route): step 1/1. It functions in the pathway purine metabolism; IMP biosynthesis via de novo pathway; IMP from 5-formamido-1-(5-phospho-D-ribosyl)imidazole-4-carboxamide: step 1/1. This Parasynechococcus marenigrum (strain WH8102) protein is Bifunctional purine biosynthesis protein PurH.